The primary structure comprises 338 residues: MELRRGGVGSQAAGRRMDGDCRDGGCGSKDAGSEDYENLPTSASVSTHMTAGAMAGILEHSIMYPVDSVKTRMQSLNPDPKARYTSIYGALKRIMHTEGFWRPLRGLNVMMMGAGPAHAMYFACYENMKRTLNDVFSHQGNSHLANGIAGSMATLLHDAVMNPAEVVKQRLQMYNSQHQSALSCIRTVWRTEGLGAFYRSYTTQLTMNIPFQSIHFITYEFLQEQVNPRRDYNPQSHIISGGLAGALAAAATTPLDVCKTLLNTQENMALSLANVSGRLSGMANAFRTVYQLNGLAGYFKGIQARVIYQMPSTAISWSVYEFFKYFLTKRQLENRTLY.

Residues 1–37 (MELRRGGVGSQAAGRRMDGDCRDGGCGSKDAGSEDYE) are disordered. Solcar repeat units lie at residues 43–131 (ASVS…MKRT), 141–225 (NSHL…LQEQ), and 232–326 (YNPQ…FKYF). The next 6 membrane-spanning stretches (helical) occupy residues 45-64 (VSTH…SIMY), 106-125 (GLNV…FACY), 143-162 (HLAN…AVMN), 200-219 (SYTT…FITY), 234-253 (PQSH…AATT), and 301-320 (GIQA…WSVY).

The protein belongs to the mitochondrial carrier (TC 2.A.29) family. As to quaternary structure, interacts with ACB10; this interaction stabilizes SLC25A37 and enhances the function of SLC25A37 to import mitochondrial iron during erythroid differentiation.

The protein localises to the mitochondrion inner membrane. The enzyme catalyses Fe(2+)(in) = Fe(2+)(out). Its function is as follows. Mitochondrial iron transporter that specifically mediates iron uptake in developing erythroid cells, thereby playing an essential role in heme biosynthesis. This chain is Mitoferrin-1 (Slc25a37), found in Rattus norvegicus (Rat).